The following is a 662-amino-acid chain: MHNMYTREQYLALCKDIEEDDYRYYVLHDPIISDYDYDMKMQKLLSIEAQHPEWRVLWSPSMRLGDRISGSFPVVTHSHPMLSIANAYTLEELNDFFSRVEKTLGYTPTYTLELKIDGIAVAIRYEQRVLVQALSRGNGRQGEDITTNIRTIRSLPLRLPKEAPEFLEVRGEVFFTRATFEQINSIQRQSEKPEFANPRNAAGGTLKLLSAKEAAQRNLELSIYGAWAEENTESHYDNLMLCQKWGFPVFGRPRQYKSVEEVVKALHEIAKIRDQLPMEIDGVVIKVDNTEDQKVLGMTAKHYRWALAYKYAPEQGETILEDILIQVGRTGVLTPVAKLRPVFLSGSKVSRASLYNEEEIERKDIRIGDTVYVEKGGEIIPKVVGVCLEKRPEGTKPWVMPEYCPVCHERVSRESDKVSVRCTNSSCSAGTIEKIRFFVGREALDIEHLGEKVITKLFDLGLIHRRCDIFQITEEDLLQVPGFKDKSIKNVLKSIEKAKSAPLERFIAALGIPYVGIGGANALAQHFLSLDAVMSASLEELKVIDGIGSKVAESIVDYFHQSDNVEEIQKMLSLGVNVLPYSRASASCQGKTFVITGSLEKMTRSEAEASIRNCGGKVGSSVSKSINYLVVGKDPGSKLKKAQELQIPILNESDLLKILYPN.

NAD(+)-binding positions include 34–38, 83–84, and Glu113; these read DYDYD and SI. Lys115 acts as the N6-AMP-lysine intermediate in catalysis. NAD(+) contacts are provided by Arg136, Glu172, Lys286, and Lys310. Positions 404, 407, 422, and 427 each coordinate Zn(2+). A BRCT domain is found at 583–662; that stretch reads RASASCQGKT…SDLLKILYPN (80 aa).

This sequence belongs to the NAD-dependent DNA ligase family. LigA subfamily. Mg(2+) serves as cofactor. Mn(2+) is required as a cofactor.

It catalyses the reaction NAD(+) + (deoxyribonucleotide)n-3'-hydroxyl + 5'-phospho-(deoxyribonucleotide)m = (deoxyribonucleotide)n+m + AMP + beta-nicotinamide D-nucleotide.. Functionally, DNA ligase that catalyzes the formation of phosphodiester linkages between 5'-phosphoryl and 3'-hydroxyl groups in double-stranded DNA using NAD as a coenzyme and as the energy source for the reaction. It is essential for DNA replication and repair of damaged DNA. The polypeptide is DNA ligase (Chlamydia felis (strain Fe/C-56) (Chlamydophila felis)).